The chain runs to 131 residues: Phosphoribosyl-AMP cyclohydrolase (131 aa).

Residue D90 coordinates Mg(2+). C91 serves as a coordination point for Zn(2+). Residues D92 and D94 each coordinate Mg(2+). The Zn(2+) site is built by C107 and C114.

This sequence belongs to the PRA-CH family. Homodimer. Requires Mg(2+) as cofactor. It depends on Zn(2+) as a cofactor.

The protein localises to the cytoplasm. The enzyme catalyses 1-(5-phospho-beta-D-ribosyl)-5'-AMP + H2O = 1-(5-phospho-beta-D-ribosyl)-5-[(5-phospho-beta-D-ribosylamino)methylideneamino]imidazole-4-carboxamide. Its pathway is amino-acid biosynthesis; L-histidine biosynthesis; L-histidine from 5-phospho-alpha-D-ribose 1-diphosphate: step 3/9. Catalyzes the hydrolysis of the adenine ring of phosphoribosyl-AMP. This Hyphomonas neptunium (strain ATCC 15444) protein is Phosphoribosyl-AMP cyclohydrolase.